The sequence spans 2475 residues: Non-reducing polyketide synthase ausA (2475 aa).

The N-terminal acylcarrier protein transacylase domain (SAT) stretch occupies residues valine 14–glutamine 253. In terms of domain architecture, Ketosynthase family 3 (KS3) spans serine 384–glutamate 800. Residues cysteine 549, histidine 684, and histidine 723 each act as for beta-ketoacyl synthase activity in the active site. The tract at residues leucine 910 to alanine 1212 is malonyl-CoA:ACP transacylase (MAT) domain. Serine 997 (for acyl/malonyl transferase activity) is an active-site residue. The segment at glutamate 1279–aspartate 1407 is N-terminal hotdog fold. A PKS/mFAS DH domain is found at glutamate 1279–arginine 1586. Positions lysine 1282–leucine 1585 are product template (PT) domain. The Proton acceptor; for dehydratase activity role is filled by histidine 1312. Residues serine 1435 to arginine 1586 are C-terminal hotdog fold. Aspartate 1493 acts as the Proton donor; for dehydratase activity in catalysis. Residues serine 1626–arginine 1703 enclose the Carrier domain. O-(pantetheine 4'-phosphoryl)serine is present on serine 1663. A methyltransferase (CMeT) domain region spans residues glutamine 1865–asparagine 2098. A thioesterase (TE) domain region spans residues serine 2127–leucine 2475. Active-site for thioesterase activity residues include serine 2250, aspartate 2412, and histidine 2444.

The enzyme catalyses 3 malonyl-CoA + acetyl-CoA + 2 S-adenosyl-L-methionine = 3,5-dimethylorsellinate + 2 S-adenosyl-L-homocysteine + 3 CO2 + 4 CoA. It participates in secondary metabolite biosynthesis; terpenoid biosynthesis. In terms of biological role, non-reducing polyketide synthase; part of the gene cluster A that mediates the biosynthesis of the fungal meroterpenoid acetoxydehydroaustin. The first step of the pathway is the synthesis of 3,5-dimethylorsellinic acid by the polyketide synthase ausA. 3,5-dimethylorsellinic acid is then prenylated by the polyprenyl transferase ausN. Further epoxidation by the FAD-dependent monooxygenase ausM and cyclization by the probable terpene cyclase ausL lead to the formation of protoaustinoid A. Protoaustinoid A is then oxidized to spiro-lactone preaustinoid A3 by the combined action of the FAD-binding monooxygenases ausB and ausC, and the dioxygenase ausE. Acid-catalyzed keto-rearrangement and ring contraction of the tetraketide portion of preaustinoid A3 by ausJ lead to the formation of preaustinoid A4. The aldo-keto reductase ausK, with the help of ausH, is involved in the next step by transforming preaustinoid A4 into isoaustinone which is in turn hydroxylated by the P450 monooxygenase ausI to form austinolide. The cytochrome P450 monooxygenase ausG then modifies austinolide to austinol. Austinol is further acetylated to austin by the O-acetyltransferase ausP, which spontaneously changes to dehydroaustin. The cytochrome P450 monooxygenase then converts dehydroaustin is into 7-dehydrodehydroaustin. The hydroxylation catalyzed by ausR permits the second O-acetyltransferase ausQ to add an additional acetyl group to the molecule, leading to the formation of acetoxydehydroaustin. Due to genetic rearrangements of the clusters and the subsequent loss of some enzymes, the end product of the Penicillium brasilianum austinoid biosynthesis clusters is acetoxydehydroaustin. The polypeptide is Non-reducing polyketide synthase ausA (Penicillium brasilianum).